Reading from the N-terminus, the 102-residue chain is Large ribosomal subunit protein bL21 (102 aa).

This sequence belongs to the bacterial ribosomal protein bL21 family. In terms of assembly, part of the 50S ribosomal subunit. Contacts protein L20.

This protein binds to 23S rRNA in the presence of protein L20. The sequence is that of Large ribosomal subunit protein bL21 from Phytoplasma australiense.